The chain runs to 291 residues: MTQNRAELNRNLAQMLKGGVIMDVTTPEQAKIAQDAGACAVMALERIPADIRAAGGVSRMSDPAMIKGIQEAVSIPVMAKVRIGHIAEARILQAIDIDYIDESEVLSPADDVYHIDKNQFDVPFVCGAKNLGEALRRIAEGAAMIRTKGEPGTGDVIQAVRHMRTMNKQIRELVALRDDEVYEAAKQLAVPYDLAKYVHDNGRLPVVNFAAGGVATPADAALMMELGAEGVFVGSGIFKSGDPAKRAAAIVKATANWQDADLLAKLSENLGEAMVGINEDEIQTIMAARGE.

Asp-23 provides a ligand contact to D-ribose 5-phosphate. Lys-80 (schiff-base intermediate with D-ribose 5-phosphate) is an active-site residue. Gly-152 lines the D-ribose 5-phosphate pocket. Residue Arg-164 coordinates D-glyceraldehyde 3-phosphate. D-ribose 5-phosphate contacts are provided by residues Gly-213 and 234–235 (GS).

It belongs to the PdxS/SNZ family. In the presence of PdxT, forms a dodecamer of heterodimers.

The enzyme catalyses aldehydo-D-ribose 5-phosphate + D-glyceraldehyde 3-phosphate + L-glutamine = pyridoxal 5'-phosphate + L-glutamate + phosphate + 3 H2O + H(+). It functions in the pathway cofactor biosynthesis; pyridoxal 5'-phosphate biosynthesis. Catalyzes the formation of pyridoxal 5'-phosphate from ribose 5-phosphate (RBP), glyceraldehyde 3-phosphate (G3P) and ammonia. The ammonia is provided by the PdxT subunit. Can also use ribulose 5-phosphate and dihydroxyacetone phosphate as substrates, resulting from enzyme-catalyzed isomerization of RBP and G3P, respectively. The protein is Pyridoxal 5'-phosphate synthase subunit PdxS of Bifidobacterium longum (strain DJO10A).